A 311-amino-acid chain; its full sequence is R2-like ligand binding oxidase (311 aa).

Residues E68, E101, and H104 each contribute to the Mn(2+) site. The 3-(O4'-tyrosyl)-valine (Val-Tyr) cross-link spans 71 to 162 (VTQDIQPFMA…AAQVRASVTY (92 aa)). A Fe cation-binding site is contributed by E101. The Fe cation site is built by E167, E202, and H205.

This sequence belongs to the ribonucleoside diphosphate reductase small chain family. R2-like ligand binding oxidase subfamily. Homodimer. The cofactor is Fe cation. Mn(2+) is required as a cofactor.

In terms of biological role, probable oxidase that might be involved in lipid metabolism. In Mycolicibacterium paratuberculosis (strain ATCC BAA-968 / K-10) (Mycobacterium paratuberculosis), this protein is R2-like ligand binding oxidase.